Reading from the N-terminus, the 300-residue chain is Ribosomal RNA small subunit methyltransferase H (300 aa).

S-adenosyl-L-methionine-binding positions include 46–48 (GGH), D65, F92, D107, and Q114.

It belongs to the methyltransferase superfamily. RsmH family.

It is found in the cytoplasm. The enzyme catalyses cytidine(1402) in 16S rRNA + S-adenosyl-L-methionine = N(4)-methylcytidine(1402) in 16S rRNA + S-adenosyl-L-homocysteine + H(+). Its function is as follows. Specifically methylates the N4 position of cytidine in position 1402 (C1402) of 16S rRNA. The sequence is that of Ribosomal RNA small subunit methyltransferase H from Prochlorococcus marinus (strain MIT 9312).